A 164-amino-acid polypeptide reads, in one-letter code: MHVTVGELIGNFILITGSFILLLVLIKKFAWSNITGIFEERAEKIASDIDRAEEARQKAEVLAQKREDELAGSRKEAKTIIENAKETAEQSKANILADAKLEAGHLKEKANQEIAQNKVEALQSVKGEVADLTISLAGKIISQNLDSHAHKALIDQYIDQLGEA.

The chain crosses the membrane as a helical span at residues 6–26 (GELIGNFILITGSFILLLVLI).

Belongs to the ATPase B chain family. In terms of assembly, F-type ATPases have 2 components, F(1) - the catalytic core - and F(0) - the membrane proton channel. F(1) has five subunits: alpha(3), beta(3), gamma(1), delta(1), epsilon(1). F(0) has three main subunits: a(1), b(2) and c(10-14). The alpha and beta chains form an alternating ring which encloses part of the gamma chain. F(1) is attached to F(0) by a central stalk formed by the gamma and epsilon chains, while a peripheral stalk is formed by the delta and b chains.

It localises to the cell membrane. Its function is as follows. F(1)F(0) ATP synthase produces ATP from ADP in the presence of a proton or sodium gradient. F-type ATPases consist of two structural domains, F(1) containing the extramembraneous catalytic core and F(0) containing the membrane proton channel, linked together by a central stalk and a peripheral stalk. During catalysis, ATP synthesis in the catalytic domain of F(1) is coupled via a rotary mechanism of the central stalk subunits to proton translocation. Component of the F(0) channel, it forms part of the peripheral stalk, linking F(1) to F(0). This is ATP synthase subunit b from Streptococcus pneumoniae serotype 2 (strain D39 / NCTC 7466).